A 312-amino-acid polypeptide reads, in one-letter code: DNA-directed RNA polymerase subunit alpha (312 aa).

An alpha N-terminal domain (alpha-NTD) region spans residues 1–229 (MLQYQIDRID…ELFQPLATVT (229 aa)). The segment at 246–312 (IPLEELNLSV…ISIPQSRTSV (67 aa)) is alpha C-terminal domain (alpha-CTD).

Belongs to the RNA polymerase alpha chain family. In cyanobacteria the RNAP catalytic core is composed of 2 alpha, 1 beta, 1 beta', 1 gamma and 1 omega subunit. When a sigma factor is associated with the core the holoenzyme is formed, which can initiate transcription.

It catalyses the reaction RNA(n) + a ribonucleoside 5'-triphosphate = RNA(n+1) + diphosphate. DNA-dependent RNA polymerase catalyzes the transcription of DNA into RNA using the four ribonucleoside triphosphates as substrates. The chain is DNA-directed RNA polymerase subunit alpha from Prochlorococcus marinus subsp. pastoris (strain CCMP1986 / NIES-2087 / MED4).